Here is a 435-residue protein sequence, read N- to C-terminus: Tol-Pal system protein TolB (435 aa).

The signal sequence occupies residues 1–26 (MKIFSPIRLVLAIAALMSVFSAPAFA).

It belongs to the TolB family. In terms of assembly, the Tol-Pal system is composed of five core proteins: the inner membrane proteins TolA, TolQ and TolR, the periplasmic protein TolB and the outer membrane protein Pal. They form a network linking the inner and outer membranes and the peptidoglycan layer.

It is found in the periplasm. In terms of biological role, part of the Tol-Pal system, which plays a role in outer membrane invagination during cell division and is important for maintaining outer membrane integrity. This chain is Tol-Pal system protein TolB, found in Agrobacterium fabrum (strain C58 / ATCC 33970) (Agrobacterium tumefaciens (strain C58)).